The chain runs to 309 residues: Putative pyridoxal kinase C6F6.11c (309 aa).

Positions 12 and 123 each coordinate substrate. ATP contacts are provided by residues 182–183 (SS) and 209–221 (LIPVIPGIFRGTG). Aspartate 222 is a binding site for substrate.

Belongs to the pyridoxine kinase family. A divalent metal cation is required as a cofactor.

The protein resides in the cytoplasm. Its subcellular location is the nucleus. The enzyme catalyses pyridoxal + ATP = pyridoxal 5'-phosphate + ADP + H(+). Its function is as follows. Required for synthesis of pyridoxal-5-phosphate from vitamin B6. This Schizosaccharomyces pombe (strain 972 / ATCC 24843) (Fission yeast) protein is Putative pyridoxal kinase C6F6.11c.